A 95-amino-acid chain; its full sequence is Large ribosomal subunit protein uL23 (95 aa).

The protein belongs to the universal ribosomal protein uL23 family. In terms of assembly, part of the 50S ribosomal subunit. Contacts protein L29, and trigger factor when it is bound to the ribosome.

Functionally, one of the early assembly proteins it binds 23S rRNA. One of the proteins that surrounds the polypeptide exit tunnel on the outside of the ribosome. Forms the main docking site for trigger factor binding to the ribosome. The sequence is that of Large ribosomal subunit protein uL23 from Levilactobacillus brevis (strain ATCC 367 / BCRC 12310 / CIP 105137 / JCM 1170 / LMG 11437 / NCIMB 947 / NCTC 947) (Lactobacillus brevis).